Reading from the N-terminus, the 234-residue chain is NAD-dependent protein deacetylase (234 aa).

A Deacetylase sirtuin-type domain is found at 1-234 (MSDITAAQTT…AVDFFEGVQV (234 aa)). Positions 23, 27, 35, 99, 101, 102, 117, 184, 185, 208, and 226 each coordinate NAD(+). Ile-101 and Asp-102 together coordinate nicotinamide. The active-site Proton acceptor is the His-117.

This sequence belongs to the sirtuin family. Class U subfamily.

It is found in the cytoplasm. The enzyme catalyses N(6)-acetyl-L-lysyl-[protein] + NAD(+) + H2O = 2''-O-acetyl-ADP-D-ribose + nicotinamide + L-lysyl-[protein]. NAD-dependent protein deacetylase which modulates the activities of several enzymes which are inactive in their acetylated form. This Lactiplantibacillus plantarum (strain ATCC BAA-793 / NCIMB 8826 / WCFS1) (Lactobacillus plantarum) protein is NAD-dependent protein deacetylase.